We begin with the raw amino-acid sequence, 807 residues long: Nucleolar complex protein 3 homolog (807 aa).

Disordered regions lie at residues 27–93 (KLKN…DMMD) and 167–191 (EKPV…EVIE). The span at 40–51 (KKYRKEQRKLRQ) shows a compositional bias: basic residues. The span at 52–78 (AVKDAVSKKPIPLEDPKSKRPVKRMER) shows a compositional bias: basic and acidic residues. Composition is skewed to acidic residues over residues 79-93 (EEDE…DMMD) and 174-190 (QQEE…EEVI). A Glycyl lysine isopeptide (Lys-Gly) (interchain with G-Cter in SUMO2) cross-link involves residue Lys332. Positions 449 to 489 (FKEKRKTLSRMQRKWKKAEEKLERELREAEASESTEKKLKL) form a coiled coil.

It belongs to the CBF/MAK21 family.

The protein resides in the nucleus. Its subcellular location is the nucleolus. The protein localises to the nucleus speckle. Its function is as follows. May be required for adipogenesis. This chain is Nucleolar complex protein 3 homolog (Noc3l), found in Mus musculus (Mouse).